We begin with the raw amino-acid sequence, 345 residues long: Tryptophan--tRNA ligase (345 aa).

ATP-binding positions include 12 to 14 and 20 to 21; these read RPT and GH. A 'HIGH' region motif is present at residues 13–21; sequence PTGKLHLGH. D144 serves as a coordination point for L-tryptophan. ATP contacts are provided by residues 156 to 158, L194, and 202 to 206; these read GKD and KMSKS. A 'KMSKS' region motif is present at residues 202–206; that stretch reads KMSKS.

The protein belongs to the class-I aminoacyl-tRNA synthetase family. As to quaternary structure, homodimer.

It localises to the cytoplasm. The enzyme catalyses tRNA(Trp) + L-tryptophan + ATP = L-tryptophyl-tRNA(Trp) + AMP + diphosphate + H(+). In terms of biological role, catalyzes the attachment of tryptophan to tRNA(Trp). The sequence is that of Tryptophan--tRNA ligase from Chlamydia caviae (strain ATCC VR-813 / DSM 19441 / 03DC25 / GPIC) (Chlamydophila caviae).